Consider the following 179-residue polypeptide: Small ribosomal subunit protein uS7 (179 aa).

This sequence belongs to the universal ribosomal protein uS7 family. As to quaternary structure, part of the 30S ribosomal subunit. Contacts proteins S9 and S11.

One of the primary rRNA binding proteins, it binds directly to 16S rRNA where it nucleates assembly of the head domain of the 30S subunit. Is located at the subunit interface close to the decoding center, probably blocks exit of the E-site tRNA. In Shigella flexneri serotype 5b (strain 8401), this protein is Small ribosomal subunit protein uS7.